A 526-amino-acid polypeptide reads, in one-letter code: Lysine--tRNA ligase (526 aa).

Mg(2+) contacts are provided by E431 and E438.

It belongs to the class-II aminoacyl-tRNA synthetase family. In terms of assembly, homodimer. It depends on Mg(2+) as a cofactor.

It is found in the cytoplasm. It catalyses the reaction tRNA(Lys) + L-lysine + ATP = L-lysyl-tRNA(Lys) + AMP + diphosphate. This Chlamydia trachomatis serovar D (strain ATCC VR-885 / DSM 19411 / UW-3/Cx) protein is Lysine--tRNA ligase (lysS).